Here is an 89-residue protein sequence, read N- to C-terminus: Small ribosomal subunit protein uS15 (89 aa).

The protein belongs to the universal ribosomal protein uS15 family. As to quaternary structure, part of the 30S ribosomal subunit. Forms a bridge to the 50S subunit in the 70S ribosome, contacting the 23S rRNA.

One of the primary rRNA binding proteins, it binds directly to 16S rRNA where it helps nucleate assembly of the platform of the 30S subunit by binding and bridging several RNA helices of the 16S rRNA. Functionally, forms an intersubunit bridge (bridge B4) with the 23S rRNA of the 50S subunit in the ribosome. The polypeptide is Small ribosomal subunit protein uS15 (Rhodospirillum centenum (strain ATCC 51521 / SW)).